Reading from the N-terminus, the 254-residue chain is 5'-nucleotidase SurE (254 aa).

Asp8, Asp9, Ser40, and Asn93 together coordinate a divalent metal cation.

The protein belongs to the SurE nucleotidase family. A divalent metal cation serves as cofactor.

Its subcellular location is the cytoplasm. It carries out the reaction a ribonucleoside 5'-phosphate + H2O = a ribonucleoside + phosphate. Nucleotidase that shows phosphatase activity on nucleoside 5'-monophosphates. The polypeptide is 5'-nucleotidase SurE (Actinobacillus pleuropneumoniae serotype 5b (strain L20)).